The sequence spans 410 residues: Elongation factor Tu, chloroplastic (410 aa).

The tr-type G domain maps to 10 to 214 (KPHVNIGTIG…NVDEYIPTPE (205 aa)). Residues 19–26 (GHVDHGKT) form a G1 region. Residue 19-26 (GHVDHGKT) participates in GTP binding. T26 lines the Mg(2+) pocket. Residues 60 to 64 (GITIN) are G2. Residues 81 to 84 (DCPG) form a G3 region. GTP-binding positions include 81–85 (DCPGH) and 136–139 (NKED). The segment at 136–139 (NKED) is G4. The tract at residues 174–176 (SAL) is G5.

The protein belongs to the TRAFAC class translation factor GTPase superfamily. Classic translation factor GTPase family. EF-Tu/EF-1A subfamily.

The protein resides in the plastid. It is found in the chloroplast stroma. The catalysed reaction is GTP + H2O = GDP + phosphate + H(+). Functionally, GTP hydrolase that promotes the GTP-dependent binding of aminoacyl-tRNA to the A-site of ribosomes during protein biosynthesis. The protein is Elongation factor Tu, chloroplastic (tufA) of Bigelowiella natans (Pedinomonas minutissima).